A 518-amino-acid chain; its full sequence is Circadian clock oscillator protein KaiC (518 aa).

One can recognise a KaiC 1 domain in the interval 1 to 247; the sequence is MTNLPEHQSS…FTINNGINIF (247 aa). S49, G50, T51, G52, K53, T54, and L55 together coordinate ATP. Residue T54 participates in Mg(2+) binding. Catalysis depends on E78, which acts as the Proton acceptor in CI (KaiC 1). S90 lines the ATP pocket. A B-loop, required to bind KaiB and SasA region spans residues 116 to 123; that stretch reads QEVAGDFD. ATP-binding residues include K225, L226, R227, T229, and H231. Residues 248 to 260 are linker; that stretch reads PLGAMRLTQRSSN. Residues 261-518 enclose the KaiC 2 domain; it reads VRVSSGVKTL…AKGMQDLESE (258 aa). ATP-binding residues include T290, G291, T292, G293, K294, T295, and L296. T295 lines the Mg(2+) pocket. E318 is a binding site for Mg(2+). The active-site Proton acceptor in CII (KaiC 2) is the E318. An ATP-binding site is contributed by W331. S431 is subject to Phosphoserine; by autocatalysis. Position 432 is a phosphothreonine; by autocatalysis (T432). Positions 451, 457, 458, 459, 461, 463, and 465 each coordinate ATP. Positions 488-497 are A-loop, interacts with KaiA; the sequence is GIISGTPTRI.

It belongs to the KaiC family. As to quaternary structure, homohexamer resembling 2 stacked donuts rings with a central pore nearly blocked on one side; hexamerization is dependent on ATP-binding. Binds 2 ATP per monomer, at the subunit interface on each ring. The KaiABC complex composition changes during the circadian cycle to control KaiC phosphorylation. Complexes KaiC(6), KaiA(2-4):KaiC(6), KaiB(6):KaiC(6) and KaiC(6):KaiB(6):KaiA(12) are among the most important forms, many form cooperatively. Interacts with SasA, probably as 1 SasA trimer:1 KaiC homohexamer, has highest affinity for unphosphorylated SasA. The CI domain binds to KaiB and SasA; as they have a similar fold they compete for the same site on CI. KaiB assumes a thioredoxin-like form called KaiB(fs) when bound to KaiC. The cofactor is Mg(2+). In terms of processing, phosphorylated on serine/threonine residues by autocatalysis. Both phosphorylated and unphosphorylated forms exist. Both autophosphorylates and autodephosphorylates. Phosphorylated form correlates with clock speed. Phosphorylated on serine and threonine residues by autocatalysis. Has a 4 step phosphorylation cycle; the autokinase acts first on Thr-432, then Ser-431. When Ser-431 is modified KaiC switches to an autophosphatase mode, acting first on phospho-Thr-432 then phospho-Ser-431.

It catalyses the reaction L-seryl-[protein] + ATP = O-phospho-L-seryl-[protein] + ADP + H(+). The enzyme catalyses L-threonyl-[protein] + ATP = O-phospho-L-threonyl-[protein] + ADP + H(+). It carries out the reaction ATP + H2O = ADP + phosphate + H(+). Its activity is regulated as follows. The interaction with KaiA enhances its phosphorylation status, while the interaction with KaiB decreases it. Its function is as follows. Central component of the KaiABC oscillator complex, which constitutes the main circadian regulator in cyanobacteria. Complex composition changes during the circadian cycle to control KaiC phosphorylation. KaiA stimulates KaiC autophosphorylation, while KaiB sequesters KaiA, leading to KaiC autodephosphorylation. Clock output pathways impact the RpaA transcriptional regulator. KaiC enhances the autophosphorylation activity of SasA, which then transfers its phosphate group to RpaA to activate it. KaiB and KaiC together enhance the phospho-RpaA dephosphatase activity of CikA. Functionally, stimulates SasA autophosphorylation. Fully phosphorylated KaiC (tested with phosphomimetic Asp-431-432-Asp) is the best stimulant, requires the ATPase activity of the CII domain. Unphosphorylated SasA associates with KaiC and its autophosphorylation activity is enhanced. Phospho-SasA is released and associates with RpaA, transferring its phosphate group. Formation of the KaiA:KaiB complex is promoted by KaiC, helping switch KaiC from its autophosphorylation to autodephosphatase function. In terms of biological role, has a weak, temperature-independent ATPase activity (about 14 molecules of ATP per day) that defines the circadian period. ATPase activity is mostly contributed by the CI domain; the CII domain augments the activity. The addition of KaiA increases activity. ATPase is inhibited during the KaiC phosphorylating phase and activated during the KaiC dephosphorylating phase. In Thermosynechococcus vestitus (strain NIES-2133 / IAM M-273 / BP-1), this protein is Circadian clock oscillator protein KaiC.